Reading from the N-terminus, the 365-residue chain is Chorismate synthase (365 aa).

NADP(+) is bound at residue R46. Residues 123–125 (RSS), 241–242 (NG), G281, 296–300 (KPTPS), and R322 each bind FMN.

It belongs to the chorismate synthase family. Homotetramer. FMNH2 serves as cofactor.

The enzyme catalyses 5-O-(1-carboxyvinyl)-3-phosphoshikimate = chorismate + phosphate. It functions in the pathway metabolic intermediate biosynthesis; chorismate biosynthesis; chorismate from D-erythrose 4-phosphate and phosphoenolpyruvate: step 7/7. In terms of biological role, catalyzes the anti-1,4-elimination of the C-3 phosphate and the C-6 proR hydrogen from 5-enolpyruvylshikimate-3-phosphate (EPSP) to yield chorismate, which is the branch point compound that serves as the starting substrate for the three terminal pathways of aromatic amino acid biosynthesis. This reaction introduces a second double bond into the aromatic ring system. In Helicobacter pylori (strain HPAG1), this protein is Chorismate synthase.